The primary structure comprises 215 residues: 5'-deoxynucleotidase YGK1 (215 aa).

One can recognise an HD domain in the interval 58 to 164 (ISDHMYRMGL…VKDIDKYEML (107 aa)). A divalent metal cation-binding residues include His-61, His-89, Asp-90, Glu-93, Asp-98, Ile-99, and Asp-159.

This sequence belongs to the HDDC2 family. In terms of assembly, homodimer. It depends on Mn(2+) as a cofactor. Requires Co(2+) as cofactor. Mg(2+) serves as cofactor.

It carries out the reaction a 2'-deoxyribonucleoside 5'-phosphate + H2O = a 2'-deoxyribonucleoside + phosphate. Its function is as follows. Catalyzes the dephosphorylation of the nucleoside 5'-monophosphates deoxyadenosine monophosphate (dAMP), deoxycytidine monophosphate (dCMP), deoxyguanosine monophosphate (dGMP) and deoxythymidine monophosphate (dTMP). This is 5'-deoxynucleotidase YGK1 from Saccharomyces cerevisiae (strain ATCC 204508 / S288c) (Baker's yeast).